The following is a 128-amino-acid chain: Histone H2A (128 aa).

The tract at residues 1-22 (MSGRGKTGGKARAKAKTRSSRA) is disordered. Position 2 is an N-acetylserine (Ser-2). Phosphoserine is present on Ser-2. Lys-6 carries the N6-(2-hydroxyisobutyryl)lysine modification. Position 6 is an N6-acetyllysine (Lys-6). Positions 7 to 19 (TGGKARAKAKTRS) are enriched in basic residues. N6-(2-hydroxyisobutyryl)lysine; alternate is present on Lys-10. Lys-10 is modified (N6-lactoyllysine; alternate). Lys-10 is subject to N6-succinyllysine. Residues Lys-14 and Lys-16 each participate in a glycyl lysine isopeptide (Lys-Gly) (interchain with G-Cter in ubiquitin) cross-link. Lys-37 carries the post-translational modification N6-(2-hydroxyisobutyryl)lysine; alternate. N6-(2-hydroxyisobutyryl)lysine is present on residues Lys-75 and Lys-76. The residue at position 96 (Lys-96) is an N6-(2-hydroxyisobutyryl)lysine; alternate. Lys-96 carries the N6-succinyllysine modification. Lys-96 carries the post-translational modification N6-glutaryllysine; alternate. Gln-105 is subject to N5-methylglutamine. N6-(2-hydroxyisobutyryl)lysine; alternate is present on Lys-119. Lys-119, Lys-120, and Lys-126 each carry N6-glutaryllysine; alternate. Lys-120 is covalently cross-linked (Glycyl lysine isopeptide (Lys-Gly) (interchain with G-Cter in ubiquitin)).

In terms of assembly, the nucleosome is a histone octamer containing two molecules each of H2A, H2B, H3 and H4 assembled in one H3-H4 heterotetramer and two H2A-H2B heterodimers. The octamer wraps approximately 147 bp of DNA. In terms of processing, monoubiquitination of Lys-120 (H2AK119Ub) gives a specific tag for epigenetic transcriptional repression. Following DNA double-strand breaks (DSBs), it is ubiquitinated through 'Lys-63' linkage of ubiquitin moieties, leading to the recruitment of repair proteins to sites of DNA damage. H2AK119Ub and ionizing radiation-induced 'Lys-63'-linked ubiquitination are distinct events. Post-translationally, phosphorylation on Ser-2 is enhanced during mitosis. Phosphorylation on Ser-2 directly represses transcription. Glutamine methylation at Gln-105 (H2AQ104me) by FBL is specifically dedicated to polymerase I. It is present at 35S ribosomal DNA locus and impairs binding of the FACT complex. In terms of tissue distribution, expressed and secreted by skin epithelium.

Its subcellular location is the nucleus. The protein localises to the chromosome. Its function is as follows. Core component of nucleosome. Nucleosomes wrap and compact DNA into chromatin, limiting DNA accessibility to the cellular machineries which require DNA as a template. Histones thereby play a central role in transcription regulation, DNA repair, DNA replication and chromosomal stability. DNA accessibility is regulated via a complex set of post-translational modifications of histones, also called histone code, and nucleosome remodeling. Functionally, the secreted form has antibacterial activity against Gram-positive bacteria and antifungal activity against S.cerevisiae. This Oncorhynchus mykiss (Rainbow trout) protein is Histone H2A.